A 331-amino-acid chain; its full sequence is Glucokinase (331 aa).

An ATP-binding site is contributed by 14–19 (GDIGGT).

This sequence belongs to the bacterial glucokinase family.

The protein localises to the cytoplasm. The enzyme catalyses D-glucose + ATP = D-glucose 6-phosphate + ADP + H(+). The protein is Glucokinase of Aromatoleum aromaticum (strain DSM 19018 / LMG 30748 / EbN1) (Azoarcus sp. (strain EbN1)).